The following is a 158-amino-acid chain: Ribosome biogenesis protein ALB1 (158 aa).

The span at 1-18 (MPSKNSINRPKLTVNLNK) shows a compositional bias: polar residues. The interval 1 to 51 (MPSKNSINRPKLTVNLNKKSQRLGQKRADRERKGLLQPERSSEASKSGEIK) is disordered. The segment covering 26 to 49 (KRADRERKGLLQPERSSEASKSGE) has biased composition (basic and acidic residues).

It belongs to the ALB1 family. As to quaternary structure, component of the nucleoplasmic and cytoplasmic pre-60S ribosomal particles.

The protein localises to the cytoplasm. Its subcellular location is the nucleus. In terms of biological role, involved in proper assembly of pre-ribosomal particles during the biogenesis of the 60S ribosomal subunit. Accompanies the pre-60S particles to the cytoplasm. This is Ribosome biogenesis protein ALB1 (ALB1) from Vanderwaltozyma polyspora (strain ATCC 22028 / DSM 70294 / BCRC 21397 / CBS 2163 / NBRC 10782 / NRRL Y-8283 / UCD 57-17) (Kluyveromyces polysporus).